An 835-amino-acid polypeptide reads, in one-letter code: Protein translocase subunit SecA (835 aa).

ATP is bound by residues glutamine 85, 103 to 107 (GEGKT), and aspartate 492. Cysteine 819, cysteine 821, cysteine 830, and cysteine 831 together coordinate Zn(2+).

This sequence belongs to the SecA family. Monomer and homodimer. Part of the essential Sec protein translocation apparatus which comprises SecA, SecYEG and auxiliary proteins SecDF. Other proteins may also be involved. Zn(2+) serves as cofactor.

The protein localises to the cell membrane. It is found in the cytoplasm. The enzyme catalyses ATP + H2O + cellular proteinSide 1 = ADP + phosphate + cellular proteinSide 2.. Functionally, part of the Sec protein translocase complex. Interacts with the SecYEG preprotein conducting channel. Has a central role in coupling the hydrolysis of ATP to the transfer of proteins into and across the cell membrane, serving as an ATP-driven molecular motor driving the stepwise translocation of polypeptide chains across the membrane. The polypeptide is Protein translocase subunit SecA (Clostridium botulinum (strain Kyoto / Type A2)).